The chain runs to 258 residues: MTLIHPTAVIDPKAELDSSVKVGAYTVIGPNVQIGANTEIGPHAVINGHTSIGENNRIFQFASLGEIPQDKKYRDEPTKLIIGNGNTIREFTTFNLGTVTGIGETRIGDDNWIMAYCHLAHDCVVGNHTIFANNASLAGHVTIGDYVVLGGYTLVFQFCRIGDYAMTAFAAGVHKDVPPYFMASGYRAEPAGLNSEGMRRNGFTAEQISAVKDVYKTLYHRGIPFEEAKADILRRAETQAELAVFRDFFAQSARGIIR.

This sequence belongs to the transferase hexapeptide repeat family. LpxA subfamily. Homotrimer.

Its subcellular location is the cytoplasm. It carries out the reaction a (3R)-hydroxyacyl-[ACP] + UDP-N-acetyl-alpha-D-glucosamine = a UDP-3-O-[(3R)-3-hydroxyacyl]-N-acetyl-alpha-D-glucosamine + holo-[ACP]. Its pathway is glycolipid biosynthesis; lipid IV(A) biosynthesis; lipid IV(A) from (3R)-3-hydroxytetradecanoyl-[acyl-carrier-protein] and UDP-N-acetyl-alpha-D-glucosamine: step 1/6. In terms of biological role, involved in the biosynthesis of lipid A, a phosphorylated glycolipid that anchors the lipopolysaccharide to the outer membrane of the cell. The sequence is that of Acyl-[acyl-carrier-protein]--UDP-N-acetylglucosamine O-acyltransferase from Neisseria meningitidis serogroup A / serotype 4A (strain DSM 15465 / Z2491).